The following is a 251-amino-acid chain: 5'-nucleotidase SurE 1 (251 aa).

Residues aspartate 8, aspartate 9, serine 39, and asparagine 95 each coordinate a divalent metal cation.

The protein belongs to the SurE nucleotidase family. It depends on a divalent metal cation as a cofactor.

Its subcellular location is the cytoplasm. It catalyses the reaction a ribonucleoside 5'-phosphate + H2O = a ribonucleoside + phosphate. Nucleotidase that shows phosphatase activity on nucleoside 5'-monophosphates. This chain is 5'-nucleotidase SurE 1, found in Thermus thermophilus (strain ATCC BAA-163 / DSM 7039 / HB27).